The primary structure comprises 333 residues: NADH-quinone oxidoreductase subunit H (333 aa).

8 helical membrane-spanning segments follow: residues 15–35, 88–108, 117–137, 159–179, 191–211, 239–259, 274–296, and 313–333; these read FFIF…FVTY, FILA…VIPF, IGVG…GVVT, ISYE…AGSL, VWYI…AVAE, WAFF…LITV, IPGA…WFRV, and VLLP…ELFF.

The protein belongs to the complex I subunit 1 family. NDH-1 is composed of 14 different subunits. Subunits NuoA, H, J, K, L, M, N constitute the membrane sector of the complex.

The protein resides in the cell membrane. The enzyme catalyses a quinone + NADH + 5 H(+)(in) = a quinol + NAD(+) + 4 H(+)(out). Functionally, NDH-1 shuttles electrons from NADH, via FMN and iron-sulfur (Fe-S) centers, to quinones in the respiratory chain. The immediate electron acceptor for the enzyme in this species is believed to be ubiquinone. Couples the redox reaction to proton translocation (for every two electrons transferred, four hydrogen ions are translocated across the cytoplasmic membrane), and thus conserves the redox energy in a proton gradient. This subunit may bind ubiquinone. This is NADH-quinone oxidoreductase subunit H from Bacillus thuringiensis subsp. konkukian (strain 97-27).